A 291-amino-acid chain; its full sequence is Protease HtpX homolog (291 aa).

The next 2 helical transmembrane spans lie at 4-24 (ILLFILTNVAVVAVLGIVASL) and 39-59 (SALLGFALIMGFGGAIISLLI). His144 is a binding site for Zn(2+). Glu145 is a catalytic residue. His148 is a binding site for Zn(2+). The next 2 membrane-spanning stretches (helical) occupy residues 159–179 (LIQGVMNTFVVFLSRVIGYAV) and 199–219 (VSTIVLDIVLGFAAAIVVAWF). Position 224 (Glu224) interacts with Zn(2+).

The protein belongs to the peptidase M48B family. Zn(2+) is required as a cofactor.

The protein localises to the cell inner membrane. The sequence is that of Protease HtpX homolog from Polaromonas naphthalenivorans (strain CJ2).